The sequence spans 335 residues: Tetraacyldisaccharide 4'-kinase (335 aa).

51 to 58 contributes to the ATP binding site; sequence HVGGAGKT.

The protein belongs to the LpxK family.

The catalysed reaction is a lipid A disaccharide + ATP = a lipid IVA + ADP + H(+). It participates in glycolipid biosynthesis; lipid IV(A) biosynthesis; lipid IV(A) from (3R)-3-hydroxytetradecanoyl-[acyl-carrier-protein] and UDP-N-acetyl-alpha-D-glucosamine: step 6/6. Transfers the gamma-phosphate of ATP to the 4'-position of a tetraacyldisaccharide 1-phosphate intermediate (termed DS-1-P) to form tetraacyldisaccharide 1,4'-bis-phosphate (lipid IVA). In Nitrobacter hamburgensis (strain DSM 10229 / NCIMB 13809 / X14), this protein is Tetraacyldisaccharide 4'-kinase.